Consider the following 346-residue polypeptide: 4-hydroxy-2-oxovalerate aldolase (346 aa).

In terms of domain architecture, Pyruvate carboxyltransferase spans 8–260 (VILHDMSLRD…ETGIDLYKIM (253 aa)). 16 to 17 (RD) is a binding site for substrate. Position 17 (Asp17) interacts with Mn(2+). His20 (proton acceptor) is an active-site residue. Ser170 and His199 together coordinate substrate. Mn(2+) is bound by residues His199 and His201. Tyr290 lines the substrate pocket.

It belongs to the 4-hydroxy-2-oxovalerate aldolase family.

The enzyme catalyses (S)-4-hydroxy-2-oxopentanoate = acetaldehyde + pyruvate. It functions in the pathway aromatic compound metabolism; naphthalene degradation. The chain is 4-hydroxy-2-oxovalerate aldolase (nahM) from Pseudomonas putida (Arthrobacter siderocapsulatus).